Reading from the N-terminus, the 271-residue chain is ATP synthase subunit a (271 aa).

Helical transmembrane passes span 40–60 (TINI…LVLF), 100–120 (LIAP…LMDL), 146–166 (DVNV…FYSI), 220–240 (LIFI…LNVP), and 242–262 (AIFH…LTIV).

This sequence belongs to the ATPase A chain family. F-type ATPases have 2 components, CF(1) - the catalytic core - and CF(0) - the membrane proton channel. CF(1) has five subunits: alpha(3), beta(3), gamma(1), delta(1), epsilon(1). CF(0) has three main subunits: a(1), b(2) and c(9-12). The alpha and beta chains form an alternating ring which encloses part of the gamma chain. CF(1) is attached to CF(0) by a central stalk formed by the gamma and epsilon chains, while a peripheral stalk is formed by the delta and b chains.

The protein resides in the cell inner membrane. Its function is as follows. Key component of the proton channel; it plays a direct role in the translocation of protons across the membrane. This Shigella dysenteriae serotype 1 (strain Sd197) protein is ATP synthase subunit a.